A 734-amino-acid polypeptide reads, in one-letter code: Photosystem I P700 chlorophyll a apoprotein A2 (734 aa).

8 helical membrane passes run 46 to 69, 135 to 158, 175 to 199, 273 to 291, 330 to 353, 369 to 395, 417 to 439, and 517 to 535; these read IFASHFGQLAIIFLWTSGNLFHVA, LYTGALFLLFLSAISLIGGWLHLQ, LNHHLSGLFGVSSLAWTGHLVHVAI, IAHHHLAIAILFLIAGHMY, IHFQLGLALASLGVITSLVAQHMY, AALYTHHQYIAGFIMTGAFAHGAIFFI, AIISHLSWASLFLGFHTLGLYVH, and FLVHHAIALGLHTTTLILV. Residues C559 and C568 each contribute to the [4Fe-4S] cluster site. The next 2 membrane-spanning stretches (helical) occupy residues 575-596 and 643-665; these read AFYLAVFWMLNTIGWVTFYWHW and LSVWAWMFLFGHLVWATGFMFLI. Residues H654, M662, and Y670 each contribute to the chlorophyll a site. W671 is a phylloquinone binding site. Residues 707 to 727 traverse the membrane as a helical segment; sequence LVGLAHFSVGYIFTYAAFLIA.

The protein belongs to the PsaA/PsaB family. The PsaA/B heterodimer binds the P700 chlorophyll special pair and subsequent electron acceptors. PSI consists of a core antenna complex that captures photons, and an electron transfer chain that converts photonic excitation into a charge separation. The eukaryotic PSI reaction center is composed of at least 11 subunits. P700 is a chlorophyll a/chlorophyll a' dimer, A0 is one or more chlorophyll a, A1 is one or both phylloquinones and FX is a shared 4Fe-4S iron-sulfur center. serves as cofactor.

Its subcellular location is the plastid. It is found in the chloroplast thylakoid membrane. It carries out the reaction reduced [plastocyanin] + hnu + oxidized [2Fe-2S]-[ferredoxin] = oxidized [plastocyanin] + reduced [2Fe-2S]-[ferredoxin]. Its function is as follows. PsaA and PsaB bind P700, the primary electron donor of photosystem I (PSI), as well as the electron acceptors A0, A1 and FX. PSI is a plastocyanin-ferredoxin oxidoreductase, converting photonic excitation into a charge separation, which transfers an electron from the donor P700 chlorophyll pair to the spectroscopically characterized acceptors A0, A1, FX, FA and FB in turn. Oxidized P700 is reduced on the lumenal side of the thylakoid membrane by plastocyanin. The sequence is that of Photosystem I P700 chlorophyll a apoprotein A2 from Aethionema grandiflorum (Persian stone-cress).